The following is a 439-amino-acid chain: Lipase 1 (439 aa).

An N-terminal signal peptide occupies residues methionine 1–glycine 24. Positions glycine 28–isoleucine 60 are disordered. The span at glycine 29 to proline 51 shows a compositional bias: acidic residues. Asparagine 124 and asparagine 151 each carry an N-linked (GlcNAc...) asparagine glycan. Serine 197 acts as the Charge relay system in catalysis. N-linked (GlcNAc...) asparagine glycans are attached at residues asparagine 346 and asparagine 379. The Charge relay system role is filled by histidine 393. N-linked (GlcNAc...) asparagine glycosylation occurs at asparagine 426.

Belongs to the AB hydrolase superfamily. Lipase family. In 14 hours embryos expression is seen in the foregut/midgut boundary.

It is found in the secreted. Its function is as follows. Could be a digestive enzyme. The protein is Lipase 1 (Lip1) of Drosophila melanogaster (Fruit fly).